A 756-amino-acid chain; its full sequence is 1,4-alpha-glucan branching enzyme GlgB (756 aa).

Asp431 serves as the catalytic Nucleophile. Catalysis depends on Glu484, which acts as the Proton donor.

It belongs to the glycosyl hydrolase 13 family. GlgB subfamily. As to quaternary structure, monomer.

The catalysed reaction is Transfers a segment of a (1-&gt;4)-alpha-D-glucan chain to a primary hydroxy group in a similar glucan chain.. The protein operates within glycan biosynthesis; glycogen biosynthesis. Catalyzes the formation of the alpha-1,6-glucosidic linkages in glycogen by scission of a 1,4-alpha-linked oligosaccharide from growing alpha-1,4-glucan chains and the subsequent attachment of the oligosaccharide to the alpha-1,6 position. The chain is 1,4-alpha-glucan branching enzyme GlgB from Prochlorococcus marinus (strain MIT 9303).